The chain runs to 365 residues: Cobalt-precorrin-5B C(1)-methyltransferase (365 aa).

Belongs to the CbiD family.

The enzyme catalyses Co-precorrin-5B + S-adenosyl-L-methionine = Co-precorrin-6A + S-adenosyl-L-homocysteine. It functions in the pathway cofactor biosynthesis; adenosylcobalamin biosynthesis; cob(II)yrinate a,c-diamide from sirohydrochlorin (anaerobic route): step 6/10. Functionally, catalyzes the methylation of C-1 in cobalt-precorrin-5B to form cobalt-precorrin-6A. This Moorella thermoacetica (strain ATCC 39073 / JCM 9320) protein is Cobalt-precorrin-5B C(1)-methyltransferase.